We begin with the raw amino-acid sequence, 154 residues long: Ascorbate-specific PTS system EIIA component (154 aa).

Positions 6–150 (SLAENKSIRL…QEVLDLIDRT (145 aa)) constitute a PTS EIIA type-2 domain. Histidine 68 serves as the catalytic Tele-phosphohistidine intermediate. Histidine 68 carries the post-translational modification Phosphohistidine.

It localises to the cytoplasm. Functionally, the phosphoenolpyruvate-dependent sugar phosphotransferase system (sugar PTS), a major carbohydrate active transport system, catalyzes the phosphorylation of incoming sugar substrates concomitantly with their translocation across the cell membrane. The enzyme II UlaABC PTS system is involved in ascorbate transport. In Escherichia coli O157:H7, this protein is Ascorbate-specific PTS system EIIA component (ulaC).